Reading from the N-terminus, the 111-residue chain is uncharacterized protein (111 aa).

4 helical membrane-spanning segments follow: residues 3-23, 24-44, 54-74, and 80-100; these read WVLVFIAGLLEVVWASSLKHA, DSLLDWIIIFILIAVSFILLI, AAYTVFVGIGTVGTYLTGIVL, and AAQMFFLALLLAGILGMKLFT.

The protein belongs to the drug/metabolite transporter (DMT) superfamily. Small multidrug resistance (SMR) (TC 2.A.7.1) family.

The protein resides in the cell membrane. This is an uncharacterized protein from Bacillus subtilis (strain 168).